The sequence spans 81 residues: Costars family protein ABRACL (81 aa).

Belongs to the costars family.

This Xenopus tropicalis (Western clawed frog) protein is Costars family protein ABRACL (abracl).